Consider the following 1479-residue polypeptide: ABC transporter ecdL (1479 aa).

The next 3 membrane-spanning stretches (helical) occupy residues 32–52 (LLFEESILYLPPLLIAASVAL), 82–102 (LSNAAIAIGFVASPIFAWLSF), and 142–162 (IASIFATIVVCKVVLLVVEAM). Residues Asn183 and Asn234 are each glycosylated (N-linked (GlcNAc...) asparagine). 2 consecutive transmembrane segments (helical) span residues 251 to 271 (WGGFLPRLCLIGVNYAQPFLV) and 291 to 311 (SGLIAAYAIVYMGIAVATAAF). Residues 258–535 (LCLIGVNYAQ…FVESLMGLRQ (278 aa)) enclose the ABC transmembrane type-1 1 domain. Residue Asn345 is glycosylated (N-linked (GlcNAc...) asparagine). A run of 2 helical transmembrane segments spans residues 365-382 (LHETWASLIEIALSLWLL) and 391-411 (VAAAMVVLVCLLVSGALSGLL). Asn427 is a glycosylation site (N-linked (GlcNAc...) asparagine). Transmembrane regions (helical) follow at residues 469–489 (LLVALVTLSYLSTTMAPTFAF) and 503–523 (PLLAAPAFSSLTIMTLLGQAV). Residues 607–835 (IVLQNHTASW…GSSLRLEELV (229 aa)) enclose the ABC transporter 1 domain. Asn611 and Asn628 each carry an N-linked (GlcNAc...) asparagine glycan. 641–648 (GPIGSGKS) is a binding site for ATP. N-linked (GlcNAc...) asparagine glycosylation is found at Asn793 and Asn797. Transmembrane regions (helical) follow at residues 885-905 (TIGWGSWWIFIVLCSGFVVAL), 955-975 (LFAVWSALAITFFLGACLHLM), 1028-1048 (ALIGAVIALILCISAMAVIVY), 1052-1072 (YLAATIPGLLGLLYLVQMFYL), and 1135-1155 (IWLTLTLDIIVAFLAIILVSI). In terms of domain architecture, ABC transmembrane type-1 2 spans 932–1193 (IWLKFWTEAN…LVYNWTALEN (262 aa)). Residue Asn1161 is glycosylated (N-linked (GlcNAc...) asparagine). Residues 1165–1185 (ASIGLALVNLIAFGANMKGLV) form a helical membrane-spanning segment. An N-linked (GlcNAc...) asparagine glycan is attached at Asn1187. Residues 1230–1461 (IKFKSVTASY…RSIFASLLRS (232 aa)) form the ABC transporter 2 domain. 1264–1271 (GRTGCGKS) is an ATP binding site. Positions 1460–1479 (RSGDEEPGNGHKHESEGEEE) are disordered. Residues 1461–1479 (SGDEEPGNGHKHESEGEEE) show a composition bias toward basic and acidic residues.

It belongs to the ABC transporter superfamily. ABCC family. Conjugate transporter (TC 3.A.1.208) subfamily.

The protein resides in the cell membrane. In terms of biological role, ABC transporter; part of the gene cluster that mediates the biosynthesis of echinocandin B, a fungal lipidated cyclic hexapeptide that acts as an antifungal agent. The sequence is that of ABC transporter ecdL from Aspergillus rugulosus (Emericella rugulosa).